The following is a 1212-amino-acid chain: DNA-directed RNA polymerase subunit beta' (1212 aa).

Zn(2+)-binding residues include C60, C62, C75, and C78. Mg(2+) is bound by residues D450, D452, and D454. Positions 819, 893, 900, and 903 each coordinate Zn(2+).

Belongs to the RNA polymerase beta' chain family. The RNAP catalytic core consists of 2 alpha, 1 beta, 1 beta' and 1 omega subunit. When a sigma factor is associated with the core the holoenzyme is formed, which can initiate transcription. Mg(2+) is required as a cofactor. Zn(2+) serves as cofactor.

The catalysed reaction is RNA(n) + a ribonucleoside 5'-triphosphate = RNA(n+1) + diphosphate. Functionally, DNA-dependent RNA polymerase catalyzes the transcription of DNA into RNA using the four ribonucleoside triphosphates as substrates. The polypeptide is DNA-directed RNA polymerase subunit beta' (Streptococcus thermophilus (strain CNRZ 1066)).